Here is a 445-residue protein sequence, read N- to C-terminus: Tubulin alpha-3 chain (445 aa).

GTP is bound by residues Gln11, Glu72, Ser141, Gly145, Thr146, Thr180, Asn207, and Asn229. Glu72 is a binding site for Mg(2+). Residue Glu255 is part of the active site.

Belongs to the tubulin family. Dimer of alpha and beta chains. A typical microtubule is a hollow water-filled tube with an outer diameter of 25 nm and an inner diameter of 15 nM. Alpha-beta heterodimers associate head-to-tail to form protofilaments running lengthwise along the microtubule wall with the beta-tubulin subunit facing the microtubule plus end conferring a structural polarity. Microtubules usually have 13 protofilaments but different protofilament numbers can be found in some organisms and specialized cells. Interacts with NUM1. Mg(2+) serves as cofactor.

It localises to the cytoplasm. The protein resides in the cytoskeleton. It carries out the reaction GTP + H2O = GDP + phosphate + H(+). Functionally, tubulin is the major constituent of microtubules, a cylinder consisting of laterally associated linear protofilaments composed of alpha- and beta-tubulin heterodimers. Microtubules grow by the addition of GTP-tubulin dimers to the microtubule end, where a stabilizing cap forms. Below the cap, tubulin dimers are in GDP-bound state, owing to GTPase activity of alpha-tubulin. The chain is Tubulin alpha-3 chain (TUB3) from Saccharomyces cerevisiae (strain ATCC 204508 / S288c) (Baker's yeast).